A 1081-amino-acid chain; its full sequence is Importin-4 (1081 aa).

At Met1 the chain carries N-acetylmethionine. One can recognise an Importin N-terminal domain in the interval 24-90 (ATEQLQIVLR…KSLILTALQR (67 aa)). HEAT repeat units follow at residues 348–385 (KLCP…GAGD), 390–427 (RLLP…NLQP), 431–471 (SYSR…NLGP), 475–513 (PYLP…AAQA), 895–932 (QFVS…HGGH), and 936–974 (EHFP…ASPT).

Belongs to the importin beta family. As to quaternary structure, found in a cytosolic complex with ASF1 (ASF1A or ASF1B) and histones H3 and H4.

The protein localises to the cytoplasm. It localises to the nucleus. Nuclear transport receptor that mediates nuclear import of proteins, such as histones, RPS3A, TNP2 and VDR. Serves as receptor for nuclear localization signals (NLS) in cargo substrates. Is thought to mediate docking of the importin/substrate complex to the nuclear pore complex (NPC) through binding to nucleoporin and the complex is subsequently translocated through the pore by an energy requiring, Ran-dependent mechanism. At the nucleoplasmic side of the NPC, Ran binds to the importin, the importin/substrate complex dissociates and importin is re-exported from the nucleus to the cytoplasm where GTP hydrolysis releases Ran. The directionality of nuclear import is thought to be conferred by an asymmetric distribution of the GTP- and GDP-bound forms of Ran between the cytoplasm and nucleus. Mediates the nuclear import of the histone H3-H4 dimer when in complex with ASF1 (ASF1A or ASF1B). Mediates the ligand-independent nuclear import of vitamin D receptor (VDR). In vitro, mediates the nuclear import of human cytomegalovirus UL84 by recognizing a non-classical NLS. In Homo sapiens (Human), this protein is Importin-4 (IPO4).